The following is an 86-amino-acid chain: Putative defensin-like protein 234 (86 aa).

Positions 1-26 (MRSATLLLVSCVLLSFILGNVKEVEA) are cleaved as a signal peptide. 4 disulfide bridges follow: cysteine 34–cysteine 86, cysteine 44–cysteine 71, cysteine 52–cysteine 80, and cysteine 69–cysteine 82.

It belongs to the DEFL family.

It localises to the secreted. The protein is Putative defensin-like protein 234 (SCRL14) of Arabidopsis thaliana (Mouse-ear cress).